The primary structure comprises 917 residues: Alanine--tRNA ligase (917 aa).

4 residues coordinate Zn(2+): His-592, His-596, Cys-694, and His-698.

This sequence belongs to the class-II aminoacyl-tRNA synthetase family. It depends on Zn(2+) as a cofactor.

It localises to the cytoplasm. It catalyses the reaction tRNA(Ala) + L-alanine + ATP = L-alanyl-tRNA(Ala) + AMP + diphosphate. Its function is as follows. Catalyzes the attachment of alanine to tRNA(Ala) in a two-step reaction: alanine is first activated by ATP to form Ala-AMP and then transferred to the acceptor end of tRNA(Ala). Also edits incorrectly charged Ser-tRNA(Ala) and Gly-tRNA(Ala) via its editing domain. The sequence is that of Alanine--tRNA ligase from Sorangium cellulosum (strain So ce56) (Polyangium cellulosum (strain So ce56)).